Reading from the N-terminus, the 162-residue chain is Ribosome-binding factor A (162 aa).

The segment at 121–162 is disordered; that stretch reads DEVARVAAGASPAGDPDPYKEPRAEDADDAEVDEPSGSRQAD. The span at 125–136 shows a compositional bias: low complexity; it reads RVAAGASPAGDP.

Belongs to the RbfA family. In terms of assembly, monomer. Binds 30S ribosomal subunits, but not 50S ribosomal subunits or 70S ribosomes.

It is found in the cytoplasm. In terms of biological role, one of several proteins that assist in the late maturation steps of the functional core of the 30S ribosomal subunit. Associates with free 30S ribosomal subunits (but not with 30S subunits that are part of 70S ribosomes or polysomes). Required for efficient processing of 16S rRNA. May interact with the 5'-terminal helix region of 16S rRNA. The sequence is that of Ribosome-binding factor A from Rhodococcus jostii (strain RHA1).